The primary structure comprises 590 residues: L-erythrulose kinase (590 aa).

In terms of domain architecture, DhaK spans 7-331; sequence QPSSFARELT…WRAPADAPAF (325 aa). H217 acts as the Tele-hemiaminal-histidine intermediate in catalysis. The DhaL domain occupies 366-568; that stretch reads HCVAAALNAA…LAMILDAVSA (203 aa). ADP is bound by residues 398–401, 441–442, G483, R540, and 553–555; these read HGIG, TS, and DAG.

The catalysed reaction is L-erythrulose + ATP = L-erythrulose 1-phosphate + ADP + H(+). It participates in carbohydrate metabolism. Involved in catabolism of D-apiose. Catalyzes the phosphorylation of L-erythrulose to L-erythrulose 1-phosphate. Can also phosphorylate D-erythrulose and dihydroxyacetone in vitro. This chain is L-erythrulose kinase, found in Pectobacterium atrosepticum (strain SCRI 1043 / ATCC BAA-672) (Erwinia carotovora subsp. atroseptica).